The primary structure comprises 716 residues: Interleukin-31 receptor subunit alpha (716 aa).

The first 18 residues, 1–18, serve as a signal peptide directing secretion; it reads MWTLALWAFSFLCKFSLA. The Extracellular segment spans residues 19–499; it reads VLPTKPENIS…TNGVRINFKT (481 aa). 5 consecutive Fibronectin type-III domains span residues 23 to 115, 117 to 211, 213 to 304, 305 to 403, and 408 to 502; these read KPEN…IAKT, PPII…TMEE, PHVL…ILRI, PDVH…QAYA, and PLKG…TLSI. 3 N-linked (GlcNAc...) asparagine glycosylation sites follow: Asn-36, Asn-48, and Asn-64. Asn-382 carries an N-linked (GlcNAc...) asparagine glycan. Residues 500–520 traverse the membrane as a helical segment; it reads LSISVFEIVLLTSLVGGGLLL. Over 521-716 the chain is Cytoplasmic; sequence LSIKTVTFGL…NIPEHSKGEV (196 aa). 2 disordered regions span residues 622 to 641 and 648 to 696; these read EYVT…FKEP and ASED…LKNS. Residues 670-679 show a composition bias toward polar residues; the sequence is QPSSSCQSPG.

This sequence belongs to the type I cytokine receptor family. Type 2 subfamily. Heterodimer with OSMR. Interacts with JAK1 and STAT3. In terms of processing, N-glycosylated. Expressed in a subset of dorsal root ganglia neurons. Expressed in spinal cord and trigeminal ganglion (at protein level). Expressed in skin, testis, bone marrow and thymus.

It is found in the cell membrane. The protein localises to the presynaptic cell membrane. It localises to the cell projection. The protein resides in the axon. In terms of biological role, associates with OSMR to form the interleukin-31 receptor which activates STAT3 and to a lower extent STAT1 and STAT5. May function in skin immunity. Mediates IL31-induced itch, probably in a manner dependent on cation channels TRPA1 and TRPV1. Positively regulates numbers and cycling status of immature subsets of myeloid progenitor cells in bone marrow in vivo and enhances myeloid progenitor cell survival in vitro. The sequence is that of Interleukin-31 receptor subunit alpha (Il31ra) from Mus musculus (Mouse).